A 256-amino-acid polypeptide reads, in one-letter code: Thiazole synthase (256 aa).

Catalysis depends on K96, which acts as the Schiff-base intermediate with DXP. 1-deoxy-D-xylulose 5-phosphate-binding positions include G157, 184–185, and 206–207; these read AG and NT.

It belongs to the ThiG family. As to quaternary structure, homotetramer. Forms heterodimers with either ThiH or ThiS.

The protein localises to the cytoplasm. The enzyme catalyses [ThiS sulfur-carrier protein]-C-terminal-Gly-aminoethanethioate + 2-iminoacetate + 1-deoxy-D-xylulose 5-phosphate = [ThiS sulfur-carrier protein]-C-terminal Gly-Gly + 2-[(2R,5Z)-2-carboxy-4-methylthiazol-5(2H)-ylidene]ethyl phosphate + 2 H2O + H(+). It participates in cofactor biosynthesis; thiamine diphosphate biosynthesis. Its function is as follows. Catalyzes the rearrangement of 1-deoxy-D-xylulose 5-phosphate (DXP) to produce the thiazole phosphate moiety of thiamine. Sulfur is provided by the thiocarboxylate moiety of the carrier protein ThiS. In vitro, sulfur can be provided by H(2)S. The protein is Thiazole synthase of Brucella abortus (strain S19).